Here is a 289-residue protein sequence, read N- to C-terminus: Probable acetolactate synthase small subunit (289 aa).

Serine 34 is subject to Phosphoserine. Positions 72 to 149 (VFNCLVQNEP…AVLDYTGTSM (78 aa)) constitute an ACT domain.

Belongs to the acetolactate synthase small subunit family.

It is found in the cytoplasm. It participates in amino-acid biosynthesis; L-isoleucine biosynthesis; L-isoleucine from 2-oxobutanoate: step 1/4. It functions in the pathway amino-acid biosynthesis; L-valine biosynthesis; L-valine from pyruvate: step 1/4. In terms of biological role, stimulates activity of the acetolactate synthase catalytic subunit ilv1. The chain is Probable acetolactate synthase small subunit from Schizosaccharomyces pombe (strain 972 / ATCC 24843) (Fission yeast).